The sequence spans 1049 residues: Vacuolar membrane protease (1049 aa).

Residues 1-11 (MKCYNPSAFVP) lie on the Cytoplasmic side of the membrane. A helical membrane pass occupies residues 12–32 (MAVTLVTVIIYLGVFIPLLII). At 33–438 (QETVPSAPDD…TVFAVFKLRT (406 aa)) the chain is on the vacuolar side. Asn50 carries an N-linked (GlcNAc...) asparagine glycan. Residues 114 to 135 (DAEAPESVPSPSNSNDGSAERY) are disordered. N-linked (GlcNAc...) asparagine glycosylation is present at Asn157. Zn(2+)-binding residues include His221 and Asp233. Glu267 (proton acceptor) is an active-site residue. 3 residues coordinate Zn(2+): Glu268, Glu293, and His365. Residues 439–459 (LFAWSLTLLIAAPLMLFAVSY) form a helical membrane-spanning segment. The Cytoplasmic segment spans residues 460-495 (LLNRQDKFYFFAGSIKAKGPEDEPISLGGWRGAFRY). The chain crosses the membrane as a helical span at residues 496 to 516 (PITLIITCAITFGCASLINKI). Residues 517 to 526 (NPMIVYSSPY) are Vacuolar-facing. A helical transmembrane segment spans residues 527–547 (SVWSMSASLFFSIFWFIMAGC). Residues 548–557 (NFVRPSALQR) lie on the Cytoplasmic side of the membrane. Residues 558–578 (GYAFMWLFVFGWIILVAATVY) form a helical membrane-spanning segment. At 579-585 (EDRFKIS) the chain is on the vacuolar side. Residues 586–606 (GGYLFVFYEAAIFLATLIAIG) traverse the membrane as a helical segment. The Cytoplasmic portion of the chain corresponds to 607-740 (EQFALPKKST…LPIWTWLVQY (134 aa)). Residues 621–686 (SQLDHDGNQD…IGGGAPTQRS (66 aa)) are disordered. Residues 622–633 (QLDHDGNQDSHH) are compositionally biased toward basic and acidic residues. A compositionally biased stretch (acidic residues) spans 655-664 (GQEEDPEDNV). A helical membrane pass occupies residues 741–761 (LLVGPFILIVVGQVGLFLVAA). Topologically, residues 762–773 (LHQTGTDGSPLL) are vacuolar. Residues 774 to 794 (LPYLVVAVFSILLLLPVTPFI) form a helical membrane-spanning segment. Residues 795-801 (HRLTHHM) are Cytoplasmic-facing. A helical transmembrane segment spans residues 802–822 (PTFFFLVFIGTLIYNLVAFPF). The Vacuolar portion of the chain corresponds to 823–1049 (SPNNRYKAYF…LVEGSKRFVV (227 aa)). Asn914 carries N-linked (GlcNAc...) asparagine glycosylation.

The protein belongs to the peptidase M28 family. The cofactor is Zn(2+).

The protein resides in the vacuole membrane. Functionally, may be involved in vacuolar sorting and osmoregulation. The chain is Vacuolar membrane protease from Botryotinia fuckeliana (strain B05.10) (Noble rot fungus).